Reading from the N-terminus, the 161-residue chain is 6,7-dimethyl-8-ribityllumazine synthase (161 aa).

Residues W26, 58–60 (SFE), and 81–83 (VVI) each bind 5-amino-6-(D-ribitylamino)uracil. Residue 86-87 (GT) participates in (2S)-2-hydroxy-3-oxobutyl phosphate binding. The active-site Proton donor is the H89. Residue F114 participates in 5-amino-6-(D-ribitylamino)uracil binding. R128 contacts (2S)-2-hydroxy-3-oxobutyl phosphate.

It belongs to the DMRL synthase family.

It catalyses the reaction (2S)-2-hydroxy-3-oxobutyl phosphate + 5-amino-6-(D-ribitylamino)uracil = 6,7-dimethyl-8-(1-D-ribityl)lumazine + phosphate + 2 H2O + H(+). It participates in cofactor biosynthesis; riboflavin biosynthesis; riboflavin from 2-hydroxy-3-oxobutyl phosphate and 5-amino-6-(D-ribitylamino)uracil: step 1/2. Functionally, catalyzes the formation of 6,7-dimethyl-8-ribityllumazine by condensation of 5-amino-6-(D-ribitylamino)uracil with 3,4-dihydroxy-2-butanone 4-phosphate. This is the penultimate step in the biosynthesis of riboflavin. The protein is 6,7-dimethyl-8-ribityllumazine synthase of Streptomyces coelicolor (strain ATCC BAA-471 / A3(2) / M145).